Consider the following 146-residue polypeptide: Angiogenin (146 aa).

A signal peptide spans M1–A24. Q25 is modified (pyrrolidone carboxylic acid). The Proton acceptor role is filled by H37. 3 disulfide bridges follow: C50-C105, C63-C116, and C81-C131. The short motif at R55–M59 is the Nucleolar localization signal element. C105 and V127 together coordinate tRNA. The active-site Proton donor is H138.

Belongs to the pancreatic ribonuclease family. As to quaternary structure, homodimer. Interacts with RNH1; inhibiting ANG ribonuclease activity. Interacts with PCNA.

It localises to the secreted. The protein localises to the nucleus. The protein resides in the nucleolus. Its subcellular location is the cytoplasm. It is found in the stress granule. With respect to regulation, has weak tRNA ribonuclease activity by itself due to partial autoinhibition by its C-terminus, which folds into a short alpha-helix that partially occludes the substrate-binding site. In absence of stress, the ribonuclease activity is inhibited by RNH1 in the cytoplasm. In response to stress, dissociates from RNH1 in the cytoplasm and associates with cytoplasmic ribosomes with vacant A-sites: ribosomes directly activate the tRNA ribonuclease activity of ANG by refolding the C-terminal alpha-helix. In response to stress, the angiogenic activity of ANG is inhibited by RNH1 in the nucleus. In terms of biological role, secreted ribonuclease that can either promote or restrict cell proliferation of target cells, depending on the context. Endocytosed in target cells via its receptor PLXNB2 and translocates to the cytoplasm or nucleus. Under stress conditions, localizes to the cytoplasm and promotes the assembly of stress granules (SGs): specifically cleaves a subset of tRNAs within anticodon loops to produce tRNA-derived stress-induced fragments (tiRNAs), resulting in translation repression and inhibition of cell proliferation. tiRNas also prevent formation of apoptosome, thereby promoting cell survival. Preferentially cleaves RNAs between a pyrimidine and an adenosine residue, suggesting that it cleaves the anticodon loop of tRNA(Ala) (32-UUAGCAU-38) after positions 33 and 36. Cleaves a subset of tRNAs, including tRNA(Ala), tRNA(Glu), tRNA(Gly), tRNA(Lys), tRNA(Val), tRNA(His), tRNA(Asp) and tRNA(Sec). Under growth conditions and in differentiated cells, translocates to the nucleus and stimulates ribosomal RNA (rRNA) transcription, including that containing the initiation site sequences of 45S rRNA, thereby promoting cell growth and proliferation. Angiogenin induces vascularization of normal and malignant tissues via its ability to promote rRNA transcription. Involved in hematopoietic stem and progenitor cell (HSPC) growth and survival by promoting rRNA transcription in growth conditions and inhibiting translation in response to stress, respectively. Mediates the crosstalk between myeloid and intestinal epithelial cells to protect the intestinal epithelial barrier integrity: secreted by myeloid cells and promotes intestinal epithelial cells proliferation and survival. Also mediates osteoclast-endothelial cell crosstalk in growing bone: produced by osteoclasts and protects the neighboring vascular cells against senescence by promoting rRNA transcription. The sequence is that of Angiogenin (ANG) from Saguinus oedipus (Cotton-top tamarin).